The following is a 301-amino-acid chain: Nucleotide-binding protein Mb1456 (301 aa).

24 to 31 contributes to the ATP binding site; the sequence is GLSGAGRG. 75-78 lines the GTP pocket; the sequence is DVRS.

Belongs to the RapZ-like family.

Functionally, displays ATPase and GTPase activities. This Mycobacterium bovis (strain ATCC BAA-935 / AF2122/97) protein is Nucleotide-binding protein Mb1456.